The sequence spans 803 residues: MNLSEIWLREYLSINLDLNEIINRITKIGLEVEKIIPVSMKFSGIKIGKVISCKQHPKCKKLKIFLIKINNKNIINVISDYDKSLINKKIAVAVNGSILPNRTIVEKKFLYGYESCGIFCTYDQLKIFGLKETSKDIIVLDKNAIIGEDIKNYFFLNDNIICIKVSHNRCDCLNIIGLSRAISSEYNELLENKLINKINSTKDYGFKIKINEPEACPKYLTRKIKYINLNVNTPIWISERIRRSGFKPKNIIIDIINYVFIETGQTIKIFDADKISGNITVRFSKEKESMMISKNKKIIIQKNTLVVSDKNSIIEIAGILLGYSARIDSKTTINIIISSVLYRSKFLFGNSVKYCINSDLAYRNERNMIDPNIQHLAINRATELILRFCCGSPGKIINYINNKFLPKKILIKLYKKKLYEILGFFISKKLIENILLLLGYKYEFIKNYWKVSVPSWRMCNVKIEEDLISDISRFYGFEKIPIDLSYKKIKYNNCKYNINTLNNAKKLLTNRGYQEIISYTFVDKNIQNIIHPNKIPVPIINPISTEMSVLRLSFFTNFIQTILYNQNRQTKYIKIFESGFCFSKNKKYKLGIKQSFFISGAVSGFKNVESWYSKQREIDFFDIKGDVETLLYLNGNSSDFEFKTCKNKEFHPGKNSKIFFKKKYVGIIGEINPNIQNKLDIKNRIFVFELLWDNIKNFYVPKIYNISDIPFNYRDISIVISNKIPIIEVIKICKDSIKKELININIFDIYQGKEIKKGHKSISIRLTLQNKNYNMTNLEINSILEKCICNLKKNFLIEIRTIC.

Positions 39–151 (SMKFSGIKIG…KNAIIGEDIK (113 aa)) constitute a tRNA-binding domain. Positions 406–482 (PKKILIKLYK…RFYGFEKIPI (77 aa)) constitute a B5 domain. Mg(2+) contacts are provided by D466 and D470. The region spanning 707 to 800 (SDIPFNYRDI…LKKNFLIEIR (94 aa)) is the FDX-ACB domain.

It belongs to the phenylalanyl-tRNA synthetase beta subunit family. Type 1 subfamily. As to quaternary structure, tetramer of two alpha and two beta subunits. Mg(2+) serves as cofactor.

It is found in the cytoplasm. It carries out the reaction tRNA(Phe) + L-phenylalanine + ATP = L-phenylalanyl-tRNA(Phe) + AMP + diphosphate + H(+). The chain is Phenylalanine--tRNA ligase beta subunit from Wigglesworthia glossinidia brevipalpis.